We begin with the raw amino-acid sequence, 98 residues long: DNA-binding protein Fis (98 aa).

The segment at residues 74 to 93 is a DNA-binding region (H-T-H motif); that stretch reads QTRAAQMMGINRGTLRKKLK.

It belongs to the transcriptional regulatory Fis family. As to quaternary structure, homodimer.

Functionally, activates ribosomal RNA transcription. Plays a direct role in upstream activation of rRNA promoters. The protein is DNA-binding protein Fis of Sodalis glossinidius (strain morsitans).